Consider the following 380-residue polypeptide: Kappa-type opioid receptor (380 aa).

Residues 1–57 are Extracellular-facing; that stretch reads MESPIQIFRGDPGPTCSPSACLLPNSSSWFPNWAESDSNGSVGSEDQQLESAHISPA. Residues Asn-25 and Asn-39 are each glycosylated (N-linked (GlcNAc...) asparagine). The helical transmembrane segment at 58-85 threads the bilayer; it reads IPVIITAVYSVVFVVGLVGNSLVMFVII. Topologically, residues 86 to 95 are cytoplasmic; that stretch reads RYTKMKTATN. The chain crosses the membrane as a helical span at residues 96 to 119; the sequence is IYIFNLALADALVTTTMPFQSAVY. At 120-132 the chain is on the extracellular side; the sequence is LMNSWPFGDVLCK. A disulfide bond links Cys-131 and Cys-210. Residues 133 to 154 form a helical membrane-spanning segment; sequence IVISIDYYNMFTSIFTLTMMSV. At 155–173 the chain is on the cytoplasmic side; it reads DRYIAVCHPVKALDFRTPL. Residues 174–196 form a helical membrane-spanning segment; it reads KAKIINICIWLLASSVGISAIVL. The Extracellular segment spans residues 197–222; that stretch reads GGTKVREDVDVIECSLQFPDDEYSWW. Residues 223-247 form a helical membrane-spanning segment; the sequence is DLFMKICVFVFAFVIPVLIIIVCYT. At 248 to 274 the chain is on the cytoplasmic side; the sequence is LMILRLKSVRLLSGSREKDRNLRRITK. The chain crosses the membrane as a helical span at residues 275–296; it reads LVLVVVAVFIICWTPIHIFILV. The Extracellular portion of the chain corresponds to 297-311; the sequence is EALGSTSHSTAALSS. The helical transmembrane segment at 312–333 threads the bilayer; that stretch reads YYFCIALGYTNSSLNPVLYAFL. Residues 334-380 lie on the Cytoplasmic side of the membrane; sequence DENFKRCFRDFCFPIKMRMERQSTNRVRNTVQDPASMRDVGGMNKPV. Cys-345 carries S-palmitoyl cysteine lipidation.

This sequence belongs to the G-protein coupled receptor 1 family. Interacts with NHERF1. Interacts with GABARAPL1. As to expression, detected in brain (at protein level). Brain (neocortex, hippocampus, amygdala, medial habenula, hypothalamus, locus ceruleus, and parabrachial nucleus).

It is found in the cell membrane. Its function is as follows. G-protein coupled opioid receptor that functions as a receptor for endogenous alpha-neoendorphins and dynorphins, but has low affinity for beta-endorphins. Also functions as a receptor for various synthetic opioids and for the psychoactive diterpene salvinorin A. Ligand binding causes a conformation change that triggers signaling via guanine nucleotide-binding proteins (G proteins) and modulates the activity of down-stream effectors, such as adenylate cyclase. Signaling leads to the inhibition of adenylate cyclase activity. Inhibits neurotransmitter release by reducing calcium ion currents and increasing potassium ion conductance. Plays a role in the perception of pain. Plays a role in mediating reduced physical activity upon treatment with synthetic opioids. Plays a role in the regulation of salivation in response to synthetic opioids. May play a role in arousal and regulation of autonomic and neuroendocrine functions. In Mus musculus (Mouse), this protein is Kappa-type opioid receptor (Oprk1).